Consider the following 469-residue polypeptide: 6-phosphogluconate dehydrogenase, NADP(+)-dependent, decarboxylating (469 aa).

NADP(+) contacts are provided by residues 10 to 15, 33 to 35, 74 to 76, and Asn102; these read GLAVMG, NRS, and VKA. Residues Asn102 and 128–130 each bind substrate; that span reads SGG. The Proton acceptor role is filled by Lys182. Residue 185–186 coordinates substrate; sequence HN. Glu189 acts as the Proton donor in catalysis. Substrate is bound by residues Tyr190, Lys260, Arg287, Arg446, and His452.

It belongs to the 6-phosphogluconate dehydrogenase family. In terms of assembly, homodimer.

The catalysed reaction is 6-phospho-D-gluconate + NADP(+) = D-ribulose 5-phosphate + CO2 + NADPH. It functions in the pathway carbohydrate degradation; pentose phosphate pathway; D-ribulose 5-phosphate from D-glucose 6-phosphate (oxidative stage): step 3/3. Catalyzes the oxidative decarboxylation of 6-phosphogluconate to ribulose 5-phosphate and CO(2), with concomitant reduction of NADP to NADPH. Is the predominant 6-P-gluconate dehydrogenase isoenzyme in B.subtilis during growth on glucose and gluconate. The polypeptide is 6-phosphogluconate dehydrogenase, NADP(+)-dependent, decarboxylating (gndA) (Bacillus subtilis (strain 168)).